Here is a 422-residue protein sequence, read N- to C-terminus: NADP-dependent malic enzyme (422 aa).

The active-site Proton donor is Y39. The active-site Proton acceptor is K94. K94 contacts substrate. Residues E136, D137, and D162 each contribute to the a divalent metal cation site. Residues 195–198 (AGAA), N286, and N318 each bind NADP(+). N318 contributes to the substrate binding site.

This sequence belongs to the malic enzymes family. Mg(2+) is required as a cofactor. The cofactor is Mn(2+).

It catalyses the reaction (S)-malate + NADP(+) = pyruvate + CO2 + NADPH. The enzyme catalyses oxaloacetate + H(+) = pyruvate + CO2. The sequence is that of NADP-dependent malic enzyme from Halomonas elongata (strain ATCC 33173 / DSM 2581 / NBRC 15536 / NCIMB 2198 / 1H9).